The sequence spans 365 residues: NAD(P)H-quinone oxidoreductase subunit 1, chloroplastic (365 aa).

Helical transmembrane passes span 29–49 (IWLL…VLVI), 106–126 (IAVI…HLVL), 129–149 (LSIG…GLLM), 250–270 (YSGI…LVSS), 302–322 (IFGM…FLFI), and 338–358 (LLNL…LLTT).

This sequence belongs to the complex I subunit 1 family. NDH is composed of at least 16 different subunits, 5 of which are encoded in the nucleus.

Its subcellular location is the plastid. The protein resides in the chloroplast thylakoid membrane. It catalyses the reaction a plastoquinone + NADH + (n+1) H(+)(in) = a plastoquinol + NAD(+) + n H(+)(out). The catalysed reaction is a plastoquinone + NADPH + (n+1) H(+)(in) = a plastoquinol + NADP(+) + n H(+)(out). In terms of biological role, NDH shuttles electrons from NAD(P)H:plastoquinone, via FMN and iron-sulfur (Fe-S) centers, to quinones in the photosynthetic chain and possibly in a chloroplast respiratory chain. The immediate electron acceptor for the enzyme in this species is believed to be plastoquinone. Couples the redox reaction to proton translocation, and thus conserves the redox energy in a proton gradient. This is NAD(P)H-quinone oxidoreductase subunit 1, chloroplastic from Acorus calamus (Sweet flag).